A 288-amino-acid chain; its full sequence is Alpha/beta hydrolase domain-containing protein 17B (288 aa).

Catalysis depends on charge relay system residues Ser170, Asp235, and His264.

Belongs to the AB hydrolase superfamily. ABHD17 family. Post-translationally, palmitoylated on cysteine residues located in a cysteine cluster at the N-terminus which promotes membrane localization.

It is found in the cell membrane. The protein resides in the recycling endosome membrane. It localises to the cell projection. The protein localises to the dendritic spine. Its subcellular location is the postsynaptic density membrane. The catalysed reaction is S-hexadecanoyl-L-cysteinyl-[protein] + H2O = L-cysteinyl-[protein] + hexadecanoate + H(+). Its function is as follows. Hydrolyzes fatty acids from S-acylated cysteine residues in proteins. Has depalmitoylating activity towards NRAS. The sequence is that of Alpha/beta hydrolase domain-containing protein 17B from Gallus gallus (Chicken).